Reading from the N-terminus, the 223-residue chain is Superoxide dismutase [Mn], mitochondrial (223 aa).

A mitochondrion-targeting transit peptide spans 1–24 (MNLIIGVAGRLLVGKNYCLNTQRL). Positions 50, 98, 184, and 188 each coordinate Mn(2+).

The protein belongs to the iron/manganese superoxide dismutase family. Homotetramer. It depends on Mn(2+) as a cofactor.

The protein localises to the mitochondrion matrix. The catalysed reaction is 2 superoxide + 2 H(+) = H2O2 + O2. Functionally, destroys superoxide anion radicals which are normally produced within the cells and which are toxic to biological systems. This is Superoxide dismutase [Mn], mitochondrial (sod-2) from Onchocerca volvulus.